Reading from the N-terminus, the 773-residue chain is Protein YhgF (773 aa).

The 70-residue stretch at 651–720 (GMILEGAVTN…QRKRIALTMR (70 aa)) folds into the S1 motif domain. Residues 721 to 773 (LDEQPGETNARRGGGNERPQNNRPAAKPRGREAQPAGNSAMMDALAAAMGKKR) form a disordered region.

The polypeptide is Protein YhgF (yhgF) (Escherichia coli (strain K12)).